The chain runs to 231 residues: Type 3 secretion system stator protein (231 aa).

The core secretion machinery of the T3SS is composed of approximately 20 different proteins, including cytoplasmic components, a base, an export apparatus and a needle. This subunit is part of the cytosolic complex. Interacts directly with Spa47/SctN (T3SS ATPase) and Spa33/SctQ (the major sorting platform component). Homodimer in solution.

The protein resides in the cytoplasm. Functionally, component of the type III secretion system (T3SS), also called injectisome, which is used to inject bacterial effector proteins into eukaryotic host cells. Acts as a regulator of the Spa47/SctN ATPase activity. It down-regulates the ATPase activity of the oligomeric Spa47/SctN, while it up-regulates the activity of the monomeric form. Important for translocation of MxiH/SctF, the major needle component. The protein is Type 3 secretion system stator protein of Shigella flexneri.